A 194-amino-acid polypeptide reads, in one-letter code: UPF0232 protein in recF-gyrB intergenic region (194 aa).

Acidic residues predominate over residues 1–14 (MTGPFDDDGPEEDA). The segment at 1 to 81 (MTGPFDDDGP…GPGPDARDPQ (81 aa)) is disordered. Positions 30–52 (DLVRRTLEEARGAARSQGKDVGR) are enriched in basic and acidic residues.

The protein belongs to the UPF0232 family.

In Mycolicibacterium smegmatis (Mycobacterium smegmatis), this protein is UPF0232 protein in recF-gyrB intergenic region.